The chain runs to 440 residues: Enolase (440 aa).

A (2R)-2-phosphoglycerate-binding site is contributed by Gln-163. The Proton donor role is filled by Glu-205. Asp-242, Glu-288, and Asp-315 together coordinate Mg(2+). Residues Lys-340, Arg-369, Ser-370, and Lys-391 each coordinate (2R)-2-phosphoglycerate. Lys-340 functions as the Proton acceptor in the catalytic mechanism.

Belongs to the enolase family. Requires Mg(2+) as cofactor.

It is found in the cytoplasm. It localises to the secreted. Its subcellular location is the cell surface. It catalyses the reaction (2R)-2-phosphoglycerate = phosphoenolpyruvate + H2O. It participates in carbohydrate degradation; glycolysis; pyruvate from D-glyceraldehyde 3-phosphate: step 4/5. Functionally, catalyzes the reversible conversion of 2-phosphoglycerate (2-PG) into phosphoenolpyruvate (PEP). It is essential for the degradation of carbohydrates via glycolysis. This chain is Enolase, found in Limosilactobacillus fermentum (strain NBRC 3956 / LMG 18251) (Lactobacillus fermentum).